The primary structure comprises 245 residues: Brasilane terpene glycosides biosynthesis cluster protein D (245 aa).

2 consecutive C3H1-type zinc fingers follow at residues 121–152 (KELK…HDNV) and 161–185 (ICHF…HYPA). The tract at residues 186–245 (PHRVTAPMPSKKKSKKLRSSVADDASHPDLGKARRHDPRDDEQNDEVWRNQGRARPGQEW) is disordered. Residues 209–226 (DASHPDLGKARRHDPRDD) are compositionally biased toward basic and acidic residues.

Functionally, part of the gene cluster that mediates the biosynthesis of the brasilane terpene glycosides brasilane D and E. The biosynthesis starts with the activity of the terpene cyclase braA that converts farnesyl pyrophosphate into the sesquiterpene alcohol trichobrasilenol. Subsequently, trichobrasilenol is glycosylated by the O-glycosyltransferase braB putatively using UDP-GlcNAc as sugar donor to yield brasilane A. The latter then undergoes two rounds of oxidation performed by the cytochrome P450 monooxygenase braC. In the first round braC hydroxylates C-12 forming brasilane D, which serves as substrate in the second round to establish the epoxide at the bond between C-5 and C-10 and oxidize the alcohol at C-12 to an aldehyde leading to the final product brasilane E. This chain is Brasilane terpene glycosides biosynthesis cluster protein D, found in Annulohypoxylon truncatum (Hypoxylon truncatum).